Reading from the N-terminus, the 434-residue chain is Tol-Pal system protein TolB (434 aa).

A signal peptide spans 1 to 21 (MIVRRALALAALALAASPALA). The interval 411 to 434 (GDRQTPVTSGKTDLAAPAWGPLAP) is disordered.

This sequence belongs to the TolB family. As to quaternary structure, the Tol-Pal system is composed of five core proteins: the inner membrane proteins TolA, TolQ and TolR, the periplasmic protein TolB and the outer membrane protein Pal. They form a network linking the inner and outer membranes and the peptidoglycan layer.

Its subcellular location is the periplasm. Functionally, part of the Tol-Pal system, which plays a role in outer membrane invagination during cell division and is important for maintaining outer membrane integrity. The chain is Tol-Pal system protein TolB from Anaeromyxobacter dehalogenans (strain 2CP-C).